Here is an 819-residue protein sequence, read N- to C-terminus: Ent-beyerene synthase KSL2, chloroplastic (819 aa).

The transit peptide at 1 to 58 directs the protein to the chloroplast; it reads MLPCLFPAYGSVVACKPSAIDRSPFGLLSQPKQTNRTLIRRPKVTKAFMAIEAMRHCS. Residues 58–76 show a composition bias toward low complexity; the sequence is SSSSSSEEGGAAATTAARS. Residues 58-77 are disordered; the sequence is SSSSSSEEGGAAATTAARSA. Mg(2+) is bound by residues D567, D571, N711, S715, and E719. Residues 567 to 571 carry the DDXXD motif motif; sequence DDFFD.

The protein belongs to the terpene synthase family. Mg(2+) is required as a cofactor. As to expression, expressed in roots. Highly expressed in stems, flowers and panicle.

It is found in the plastid. Its subcellular location is the chloroplast. The enzyme catalyses ent-copalyl diphosphate = ent-beyerene + diphosphate. The catalysed reaction is ent-copalyl diphosphate = ent-kaur-16-ene + diphosphate. It functions in the pathway secondary metabolite biosynthesis; terpenoid biosynthesis. In terms of biological role, diterpene cyclase involved in jasmonic acid-dependent defense mechanisms in roots by mediating the biosynthesis of labdane-related diterpenoids (LRDs) natural products such as ent-beyerene, an antimicrobial compound. Catalyzes the cyclization of ent-CDP into ent-beyerene as a major and ent-kaurene as a minor product. May be involved in the catalysis of an early step of the gibberellin (GA) biosynthesis pathway. This is Ent-beyerene synthase KSL2, chloroplastic from Oryza sativa subsp. japonica (Rice).